Reading from the N-terminus, the 531-residue chain is DNA damage-binding protein cmr1 (531 aa).

Disordered stretches follow at residues 37–83 (GIFP…RGIA) and 218–264 (DASQ…MHIH). Positions 53-64 (KPKKKPAPKKIK) are enriched in basic residues. One copy of the WD 1 repeat lies at 186–227 (VTPERIYTMTFHPSEAKPLIFAGDKMGNLGVLDASQERPVSS). The segment covering 233-245 (GDEEEQEDDDDPD) has biased composition (acidic residues). WD repeat units follow at residues 253 to 293 (PHTR…SVET), 300 to 340 (SDDV…RTAV), 345 to 385 (LSEK…HDDP), 392 to 431 (LSRL…ASWE), 454 to 497 (GRWV…LAQL), and 500 to 531 (DGIT…CLWM).

It belongs to the WD repeat DDB2/WDR76 family.

Its function is as follows. DNA-binding protein that binds to both single- and double-stranded DNA. Binds preferentially to UV-damaged DNA. May be involved in DNA-metabolic processes. The polypeptide is DNA damage-binding protein cmr1 (Aspergillus clavatus (strain ATCC 1007 / CBS 513.65 / DSM 816 / NCTC 3887 / NRRL 1 / QM 1276 / 107)).